The primary structure comprises 307 residues: GTPase Era (307 aa).

Residues 14-184 (HSGFVAIVGK…REQILDILPE (171 aa)) form the Era-type G domain. The tract at residues 22–29 (GKPNVGKS) is G1. A GTP-binding site is contributed by 22–29 (GKPNVGKS). Residues 48-52 (QTTRR) are G2. A G3 region spans residues 69–72 (DTPG). Residues 69 to 73 (DTPGL) and 131 to 134 (NKTD) each bind GTP. Residues 131 to 134 (NKTD) are G4. Positions 162–164 (LSA) are G5. The 78-residue stretch at 215 to 292 (LREELPYAVA…FLGLEVIVIP (78 aa)) folds into the KH type-2 domain.

The protein belongs to the TRAFAC class TrmE-Era-EngA-EngB-Septin-like GTPase superfamily. Era GTPase family. In terms of assembly, monomer.

The protein localises to the cytoplasm. It localises to the cell membrane. Functionally, an essential GTPase that binds both GDP and GTP, with rapid nucleotide exchange. Plays a role in 16S rRNA processing and 30S ribosomal subunit biogenesis and possibly also in cell cycle regulation and energy metabolism. The chain is GTPase Era from Deinococcus deserti (strain DSM 17065 / CIP 109153 / LMG 22923 / VCD115).